The chain runs to 208 residues: Porimin (208 aa).

The N-terminal stretch at 1 to 26 (MGLGARGAWAALLLGTLQVLALLGAA) is a signal peptide. At 27 to 166 (HESAAMAASA…EAKKGSKFDT (140 aa)) the chain is on the extracellular side. Residues 42-57 (GLPHNSSANSTETLQH) show a composition bias toward polar residues. Residues 42–125 (GLPHNSSANS…PKTTSVSQNT (84 aa)) are disordered. N-linked (GlcNAc...) asparagine glycans are attached at residues asparagine 46, asparagine 50, asparagine 64, asparagine 68, asparagine 83, asparagine 96, and asparagine 106. Polar residues predominate over residues 65 to 107 (ETSNSTVKPPTSVASDSSNTTVTTMKPTAASNTTTPGMVSTNM). A compositionally biased stretch (low complexity) spans 108–122 (TSTTLKSTPKTTSVS). 2 N-linked (GlcNAc...) asparagine glycosylation sites follow: asparagine 124 and asparagine 138. Residues 167 to 187 (GSFVGGIVLTLGVLSILYIGC) traverse the membrane as a helical segment. Topologically, residues 188–208 (KMYYSRRGIRYRTIDEHDAII) are cytoplasmic.

The protein belongs to the CD164 family. As to expression, ubiquitous. Not expressed in ovary. Expressed in keratinocytes.

Its subcellular location is the membrane. In terms of biological role, implicated in oncotic cell death, characterized by cell swelling, organelle swelling, vacuolization and increased membrane permeability. This is Porimin (TMEM123) from Homo sapiens (Human).